The following is a 46-amino-acid chain: Defensin-like protein AX1 (46 aa).

4 disulfides stabilise this stretch: Cys3-Cys46, Cys14-Cys34, Cys20-Cys40, and Cys24-Cys42.

In terms of tissue distribution, leaves and flowers.

Its function is as follows. Strong inhibiting activity against C.beticola and other filamentous fungi. Little or no effect against bacteria. The protein is Defensin-like protein AX1 of Beta vulgaris (Sugar beet).